The primary structure comprises 154 residues: D-aminoacyl-tRNA deacylase (154 aa).

Residues 138 to 139 (GP) carry the Gly-cisPro motif, important for rejection of L-amino acids motif.

This sequence belongs to the DTD family. Homodimer.

It is found in the cytoplasm. The catalysed reaction is glycyl-tRNA(Ala) + H2O = tRNA(Ala) + glycine + H(+). It catalyses the reaction a D-aminoacyl-tRNA + H2O = a tRNA + a D-alpha-amino acid + H(+). An aminoacyl-tRNA editing enzyme that deacylates mischarged D-aminoacyl-tRNAs. Also deacylates mischarged glycyl-tRNA(Ala), protecting cells against glycine mischarging by AlaRS. Acts via tRNA-based rather than protein-based catalysis; rejects L-amino acids rather than detecting D-amino acids in the active site. By recycling D-aminoacyl-tRNA to D-amino acids and free tRNA molecules, this enzyme counteracts the toxicity associated with the formation of D-aminoacyl-tRNA entities in vivo and helps enforce protein L-homochirality. The polypeptide is D-aminoacyl-tRNA deacylase (Halorhodospira halophila (strain DSM 244 / SL1) (Ectothiorhodospira halophila (strain DSM 244 / SL1))).